Here is a 195-residue protein sequence, read N- to C-terminus: Phenoloxidase subunit 1 (195 aa).

Cu cation is bound at residue H10. N-linked (GlcNAc...) asparagine glycosylation is found at N77, N97, and N98.

The protein belongs to the tyrosinase family. As to quaternary structure, heterodimer. Cu(2+) is required as a cofactor.

The protein localises to the secreted. It catalyses the reaction 2 L-dopa + O2 = 2 L-dopaquinone + 2 H2O. It carries out the reaction L-tyrosine + O2 = L-dopaquinone + H2O. Its function is as follows. This is a copper-containing oxidase that functions in the formation of pigments such as melanins and other polyphenolic compounds. Catalyzes the rate-limiting conversions of tyrosine to DOPA, DOPA to DOPA-quinone and possibly 5,6 dihydroxyindole to indole-5'6 quinone. The chain is Phenoloxidase subunit 1 from Simulium damnosum (Black fly).